Here is a 1190-residue protein sequence, read N- to C-terminus: PAN2-PAN3 deadenylation complex catalytic subunit PAN2 (1190 aa).

WD repeat units follow at residues 24 to 63, 129 to 166, 167 to 207, 222 to 264, 266 to 306, and 322 to 361; these read TTIVNITSLQFDSVQNFIWCGDSRGYTRSFTGSFATNSLY, NKFNNLQAMTFNCNSFNDVVVGTDTSMMKFDLNKPNVL, SSFD…TMKT, GNYI…AIAP, PFPA…NVYL, and NNKPRMSNLEISENGDFLVFNDNCDNMHLWSISPSSKDFV. Residues 364–511 form a linker region; the sequence is PQPVEQPDII…FQYKFQGKLN (148 aa). In terms of domain architecture, USP spans 512 to 924; sequence KVPNCYSRLQ…KPIVIMYQQT (413 aa). Residues 988–1158 enclose the Exonuclease domain; that stretch reads VAIDAEFVML…EDANTALLLY (171 aa). A divalent metal cation-binding residues include D991, E993, D1097, and D1150.

This sequence belongs to the peptidase C19 family. PAN2 subfamily. Forms a heterotrimer with an asymmetric homodimer of the regulatory subunit PAN3 to form the poly(A)-nuclease (PAN) deadenylation complex. It depends on a divalent metal cation as a cofactor.

The protein resides in the cytoplasm. It carries out the reaction Exonucleolytic cleavage of poly(A) to 5'-AMP.. With respect to regulation, positively regulated by the regulatory subunit PAN3. Functionally, catalytic subunit of the poly(A)-nuclease (PAN) deadenylation complex, one of two cytoplasmic mRNA deadenylases involved in mRNA turnover. PAN specifically shortens poly(A) tails of RNA and the activity is stimulated by poly(A)-binding protein PAB1. PAN deadenylation is followed by rapid degradation of the shortened mRNA tails by the CCR4-NOT complex. Deadenylated mRNAs are then degraded by two alternative mechanisms, namely exosome-mediated 3'-5' exonucleolytic degradation, or deadenylation-dependent mRNA decaping and subsequent 5'-3' exonucleolytic degradation by XRN1. May also be involved in post-transcriptional maturation of mRNA poly(A) tails. In Candida albicans (strain SC5314 / ATCC MYA-2876) (Yeast), this protein is PAN2-PAN3 deadenylation complex catalytic subunit PAN2.